We begin with the raw amino-acid sequence, 417 residues long: Serine--tRNA ligase (417 aa).

226–228 is an L-serine binding site; sequence TSE. Residues 257–259 and Val273 contribute to the ATP site; that span reads RRE. Glu280 contributes to the L-serine binding site. 344 to 347 contributes to the ATP binding site; that stretch reads ELTS. An L-serine-binding site is contributed by Thr379.

It belongs to the class-II aminoacyl-tRNA synthetase family. Type-1 seryl-tRNA synthetase subfamily. Homodimer. The tRNA molecule binds across the dimer.

The protein localises to the cytoplasm. It catalyses the reaction tRNA(Ser) + L-serine + ATP = L-seryl-tRNA(Ser) + AMP + diphosphate + H(+). The catalysed reaction is tRNA(Sec) + L-serine + ATP = L-seryl-tRNA(Sec) + AMP + diphosphate + H(+). It functions in the pathway aminoacyl-tRNA biosynthesis; selenocysteinyl-tRNA(Sec) biosynthesis; L-seryl-tRNA(Sec) from L-serine and tRNA(Sec): step 1/1. Catalyzes the attachment of serine to tRNA(Ser). Is also able to aminoacylate tRNA(Sec) with serine, to form the misacylated tRNA L-seryl-tRNA(Sec), which will be further converted into selenocysteinyl-tRNA(Sec). The chain is Serine--tRNA ligase from Mycobacterium sp. (strain KMS).